The sequence spans 597 residues: Hydrogenase-1 large chain (597 aa).

Residues cysteine 76, cysteine 79, cysteine 576, and cysteine 579 each coordinate Ni(2+).

It belongs to the [NiFe]/[NiFeSe] hydrogenase large subunit family. Heterodimer of a large and a small subunit. Ni(2+) serves as cofactor.

Its subcellular location is the cell membrane. It catalyses the reaction H2 + A = AH2. Functionally, this is one of three E.coli hydrogenases synthesized in response to different physiological conditions. HYD1 is believed to have a role in hydrogen cycling during fermentative growth. This is Hydrogenase-1 large chain (hyaB) from Escherichia coli (strain K12).